The following is a 426-amino-acid chain: 3-phosphoshikimate 1-carboxyvinyltransferase (426 aa).

Lys22, Ser23, and Arg27 together coordinate 3-phosphoshikimate. Lys22 serves as a coordination point for phosphoenolpyruvate. Phosphoenolpyruvate is bound by residues Gly96 and Arg124. 3-phosphoshikimate is bound by residues Ser170, Ser171, Gln172, Ser198, Asp314, Asn337, and Lys341. Gln172 is a binding site for phosphoenolpyruvate. The active-site Proton acceptor is the Asp314. Arg345, Arg387, and Lys412 together coordinate phosphoenolpyruvate.

This sequence belongs to the EPSP synthase family. In terms of assembly, monomer.

The protein resides in the cytoplasm. The catalysed reaction is 3-phosphoshikimate + phosphoenolpyruvate = 5-O-(1-carboxyvinyl)-3-phosphoshikimate + phosphate. The protein operates within metabolic intermediate biosynthesis; chorismate biosynthesis; chorismate from D-erythrose 4-phosphate and phosphoenolpyruvate: step 6/7. Its function is as follows. Catalyzes the transfer of the enolpyruvyl moiety of phosphoenolpyruvate (PEP) to the 5-hydroxyl of shikimate-3-phosphate (S3P) to produce enolpyruvyl shikimate-3-phosphate and inorganic phosphate. This Shewanella oneidensis (strain ATCC 700550 / JCM 31522 / CIP 106686 / LMG 19005 / NCIMB 14063 / MR-1) protein is 3-phosphoshikimate 1-carboxyvinyltransferase.